The following is a 501-amino-acid chain: L-ornithine N(5)-monooxygenase (501 aa).

Residues 1–31 (MESVERKSESSYLGMRNMQPEQRLSLDPPRL) form a disordered region. FAD-binding positions include 83–91 (ERQKQFAWH) and Gln-102. Lys-107 is a binding site for substrate. Val-168 contacts FAD. NADP(+) contacts are provided by residues 254 to 257 (SGQS) and Arg-279. Residues 293 to 296 (NEIF) and Asn-323 contribute to the substrate site. 323–325 (NYS) contributes to the NADP(+) binding site. The interval 366-390 (EHHGPQSRMRIHLKSSKPESEGAAN) is disordered. Over residues 381–390 (SKPESEGAAN) the composition is skewed to basic and acidic residues. Residue 466 to 468 (SLL) coordinates FAD. Position 469 (Ser-469) interacts with substrate.

Belongs to the lysine N(6)-hydroxylase/L-ornithine N(5)-oxygenase family. As to quaternary structure, homotetramer. FAD serves as cofactor.

The enzyme catalyses L-ornithine + NADPH + O2 = N(5)-hydroxy-L-ornithine + NADP(+) + H2O. The catalysed reaction is L-ornithine + NADH + O2 = N(5)-hydroxy-L-ornithine + NAD(+) + H2O. The protein operates within siderophore biosynthesis; ferrichrome biosynthesis. Functionally, L-ornithine N(5)-monooxygenase; part of the siderophore biosynthetic pathway. Aspergillus fumigatus produces four types of siderophores, low-molecular-mass iron chelators, including excreted fusarinine C (FsC) and triacetylfusarinine C (TAFC) for iron uptake; and intacellular ferricrocin (FC) for hyphal and hydroxyferricrocin (HFC) for conidial iron distribution and storage. TAFC consists of three N(2)-acetyl-N(5)-anhydromevalonyl-N(5)-hydroxyornithine residues cyclically linked by ester bonds; FC is a cyclic hexapeptide with the structure Gly-Ser-Gly-(N(5)-acetyl-N(5)-hydroxyornithine)x3. The biosynthesis of all four siderophores depends on the hydroxylation of ornithine, catalyzed by the monooxygenase sidA. SidA is highly specific for its substrate, only hydrolyzing l-ornithine, and has preference for NADPH over NADH, NADPH playing a role in stabilization of the C4a-hydroperoxyflavin intermediate. Subsequently, the pathways for biosynthesis of extra- and intracellular siderophores split. For biosynthesis of extracellular siderophores, the transacylase sidF transfers anhydromevalonyl to N(5)-hydroxyornithine. The required anhydromevalonyl-CoA moiety is derived from mevalonate by CoA ligation and dehydration catalyzed by sidI and sidH respectively. The acetylation of N(5)-hydroxyornithine for FC biosynthesis involves the constitutively expressed sidL. FC is hydroxylated to HFC by an as yet uncharacterized enzyme during conidiation. Assembly of fusarinine C (FsC) and FC is catalyzed by two different nonribosomal peptide synthetases (NRPS), sidD and sidC respectively. Subsequently, sidG catalyzes N2-acetylation of FsC for forming TAFC. Both extra- and intracellular siderophores are crucial for growth during iron limitation and virulence. This Aspergillus fumigatus (strain ATCC MYA-4609 / CBS 101355 / FGSC A1100 / Af293) (Neosartorya fumigata) protein is L-ornithine N(5)-monooxygenase.